Reading from the N-terminus, the 930-residue chain is Isoleucine--tRNA ligase (930 aa).

The 'HIGH' region signature appears at 57–67 (PYANGNIHVGH). Position 554 (E554) interacts with L-isoleucyl-5'-AMP. Residues 595–599 (KMSKS) carry the 'KMSKS' region motif. ATP is bound at residue K598. Zn(2+) contacts are provided by C888, C891, C908, and C911.

It belongs to the class-I aminoacyl-tRNA synthetase family. IleS type 1 subfamily. In terms of assembly, monomer. Requires Zn(2+) as cofactor.

The protein localises to the cytoplasm. It carries out the reaction tRNA(Ile) + L-isoleucine + ATP = L-isoleucyl-tRNA(Ile) + AMP + diphosphate. Functionally, catalyzes the attachment of isoleucine to tRNA(Ile). As IleRS can inadvertently accommodate and process structurally similar amino acids such as valine, to avoid such errors it has two additional distinct tRNA(Ile)-dependent editing activities. One activity is designated as 'pretransfer' editing and involves the hydrolysis of activated Val-AMP. The other activity is designated 'posttransfer' editing and involves deacylation of mischarged Val-tRNA(Ile). In Streptococcus gordonii (strain Challis / ATCC 35105 / BCRC 15272 / CH1 / DL1 / V288), this protein is Isoleucine--tRNA ligase.